Consider the following 472-residue polypeptide: ATP synthase subunit beta (472 aa).

Residue 157–164 (GGAGVGKT) coordinates ATP.

It belongs to the ATPase alpha/beta chains family. F-type ATPases have 2 components, CF(1) - the catalytic core - and CF(0) - the membrane proton channel. CF(1) has five subunits: alpha(3), beta(3), gamma(1), delta(1), epsilon(1). CF(0) has three main subunits: a(1), b(2) and c(9-12). The alpha and beta chains form an alternating ring which encloses part of the gamma chain. CF(1) is attached to CF(0) by a central stalk formed by the gamma and epsilon chains, while a peripheral stalk is formed by the delta and b chains.

Its subcellular location is the cell inner membrane. It catalyses the reaction ATP + H2O + 4 H(+)(in) = ADP + phosphate + 5 H(+)(out). Produces ATP from ADP in the presence of a proton gradient across the membrane. The catalytic sites are hosted primarily by the beta subunits. In Desulfatibacillum aliphaticivorans, this protein is ATP synthase subunit beta.